A 370-amino-acid polypeptide reads, in one-letter code: DNA replication and repair protein RecF (370 aa).

30-37 (GQNGMGKT) serves as a coordination point for ATP.

This sequence belongs to the RecF family.

It localises to the cytoplasm. The RecF protein is involved in DNA metabolism; it is required for DNA replication and normal SOS inducibility. RecF binds preferentially to single-stranded, linear DNA. It also seems to bind ATP. In Bacteroides fragilis (strain ATCC 25285 / DSM 2151 / CCUG 4856 / JCM 11019 / LMG 10263 / NCTC 9343 / Onslow / VPI 2553 / EN-2), this protein is DNA replication and repair protein RecF.